Consider the following 146-residue polypeptide: Hemoglobin subunit beta (146 aa).

A Globin domain is found at 2–146 (HWTAEEKQLI…VAHALARKYH (145 aa)). Residues His63 and His92 each coordinate heme b.

This sequence belongs to the globin family. Heterotetramer of two alpha chains and two beta chains. As to expression, red blood cells.

Its function is as follows. Involved in oxygen transport from the lung to the various peripheral tissues. The sequence is that of Hemoglobin subunit beta (HBB) from Branta canadensis (Canada goose).